The primary structure comprises 450 residues: MKLQINSSWQERFLADPPREKDHRPPFRRDRGRILHSAAFRCLQAKTQIHAIGENDFYRTRLTHSLEVAQIGSSIVAQMKLIDSFISLAQQLKEDRAELQKQLKLILPSNDLIESLCFAHDIGHPPFGHGGEVALNYMMRHHGGFEGNAQTFRLLTKLEPYTPNAGMNLTRRTLLGVVKYPTILDRSSPQYHQGVIVDNVDSKYVKISAWKPGKGIFRDDLKMFEWLLEPLSENDRTLFGQYKKERTRPDEVLKTRYKSLDCSIMELADDIAYAVHDLEDAIVVGVVTFQQWQSAVEKLTECRSEWIVENVQSLSQKLFSELHYERKNAIGALVNYFITHVRWKINNGFSEPLLRYNAELPDEVIEVLTIFKHFVWEYVIKHVDTQRVEYKGQRMLTEMFQIFDSDPLRLLPRNTAMRWQKATETDRKRIICDYIAGMSDAYALRVYQQL.

The HD domain maps to 61–274 (RLTHSLEVAQ…MELADDIAYA (214 aa)).

Belongs to the dGTPase family. Type 2 subfamily.

This chain is Deoxyguanosinetriphosphate triphosphohydrolase-like protein, found in Histophilus somni (strain 2336) (Haemophilus somnus).